A 1150-amino-acid polypeptide reads, in one-letter code: BAI1-associated protein 3 (1150 aa).

The tract at residues arginine 22–proline 44 is disordered. Positions serine 139 to alanine 298 constitute a C2 1 domain. Positions 174 and 180 each coordinate Ca(2+). The tract at residues alanine 193–serine 214 is disordered. Residues aspartate 258 and aspartate 260 each coordinate Ca(2+). The MHD1 domain occupies phenylalanine 626–leucine 747. The 109-residue stretch at aspartate 851–phenylalanine 959 folds into the MHD2 domain. Residues arginine 973 to glycine 1099 form the C2 2 domain. Residues leucine 1003, aspartate 1004, aspartate 1010, aspartate 1068, aspartate 1070, serine 1073, and aspartate 1076 each coordinate Ca(2+).

The protein belongs to the unc-13 family. Interacts with ADGRB1, this interaction is direct. Interacts with endosomal SNARE proteins VAMP3, VAMP4, STX6 and STX16; this interaction is increased in the presence of calcium. Ca(2+) serves as cofactor. In terms of tissue distribution, prominently expressed in brain structures including hypothalamus, amygdala, stria terminalis and periaqueductal gray (at protein level). Expressed in nonneuronal tissues, including placenta, lung, pancreas, spleen, and testes. Within placenta, expression is restricted to the syncytiotrophoblasts.

It localises to the cytoplasm. Its subcellular location is the cytosol. It is found in the recycling endosome membrane. The protein localises to the late endosome membrane. The protein resides in the golgi apparatus. It localises to the trans-Golgi network membrane. Its subcellular location is the cell membrane. Its function is as follows. Functions in endosome to Golgi retrograde transport. In response to calcium influx, may interact with SNARE fusion receptors and membrane phospholipids to mediate endosome fusion with the trans-Golgi network. By promoting the recycling of secretory vesicle transmembrane proteins, it indirectly controls dense-core secretory vesicle biogenesis, maturation and their ability to mediate the constitutive and regulated secretion of neurotransmitters and hormones. May regulate behavior and food intake by controlling calcium-stimulated exocytosis of neurotransmitters including NPY and serotonin and hormones like insulin. Proposed to play a role in hypothalamic neuronal firing by modulating gamma-aminobutyric acid (GABA)ergic inhibitory neurotransmission. The polypeptide is BAI1-associated protein 3 (Mus musculus (Mouse)).